Here is a 751-residue protein sequence, read N- to C-terminus: Catalase-peroxidase 1 (751 aa).

Over residues 1–11 the composition is skewed to basic and acidic residues; that stretch reads MTDKQHTRSVS. The interval 1-31 is disordered; the sequence is MTDKQHTRSVSESENPAIPSPTPKVSRPRRN. The segment at residues 103 to 225 is a cross-link (tryptophyl-tyrosyl-methioninium (Trp-Tyr) (with M-251)); it reads WHAAGTYRIA…LANVQMGLIY (123 aa). The Proton acceptor role is filled by His-104. A cross-link (tryptophyl-tyrosyl-methioninium (Tyr-Met) (with W-103)) is located at residues 225 to 251; sequence YVNPEGPGGNPDPLAAARDIRETFARM. Position 266 (His-266) interacts with heme b. A disordered region spans residues 345–375; the sequence is AGAKQWKPKNPEANDTVPDAHGASRRHSPTM.

This sequence belongs to the peroxidase family. Peroxidase/catalase subfamily. As to quaternary structure, homodimer or homotetramer. The cofactor is heme b. In terms of processing, formation of the three residue Trp-Tyr-Met cross-link is important for the catalase, but not the peroxidase activity of the enzyme.

The enzyme catalyses H2O2 + AH2 = A + 2 H2O. It carries out the reaction 2 H2O2 = O2 + 2 H2O. Functionally, bifunctional enzyme with both catalase and broad-spectrum peroxidase activity. This is Catalase-peroxidase 1 from Cupriavidus pinatubonensis (strain JMP 134 / LMG 1197) (Cupriavidus necator (strain JMP 134)).